The following is a 324-amino-acid chain: MPEQAIVIAMAVSFLITVVLSPLFIPFLRRLKFGQSIREEGPKSHQKKSGTPTMGGIMILLAIVATTLWITPKIAGLSTRTYLLLLVTVGYGVLGFLDDMIKVVMKRNLGLTSRQKFIGQLLIAAIFFAVYRQSGFSTVLHIPGADWSVDLGWAYGVLLLFMLVGGSNAVNLTDGLDGLLAGTAAIAFGAYAVLAWNQGQYDVAVFCVAVVGAVLGFLVFNAHPAKVFMGDTGSLALGGAIAAVAVLTKLELLLVIIGGVFVIETLSVIIQVASFKTTGRRVFRMSPLHHHYELVGWSEWRIVVTFWAVGLLFAMLGIYIEVWM.

A run of 10 helical transmembrane segments spans residues 5–25 (AIVI…PLFI), 57–77 (IMIL…IAGL), 81–101 (TYLL…DDMI), 117–137 (FIGQ…SGFS), 147–167 (WSVD…VGGS), 176–196 (LDGL…VLAW), 203–223 (VAVF…FNAH), 227–247 (VFMG…VAVL), 250–270 (LELL…SVII), and 302–322 (IVVT…YIEV).

The protein belongs to the glycosyltransferase 4 family. MraY subfamily. Mg(2+) serves as cofactor.

It is found in the cell membrane. It carries out the reaction UDP-N-acetyl-alpha-D-muramoyl-L-alanyl-gamma-D-glutamyl-meso-2,6-diaminopimeloyl-D-alanyl-D-alanine + di-trans,octa-cis-undecaprenyl phosphate = di-trans,octa-cis-undecaprenyl diphospho-N-acetyl-alpha-D-muramoyl-L-alanyl-D-glutamyl-meso-2,6-diaminopimeloyl-D-alanyl-D-alanine + UMP. It participates in cell wall biogenesis; peptidoglycan biosynthesis. Catalyzes the initial step of the lipid cycle reactions in the biosynthesis of the cell wall peptidoglycan: transfers peptidoglycan precursor phospho-MurNAc-pentapeptide from UDP-MurNAc-pentapeptide onto the lipid carrier undecaprenyl phosphate, yielding undecaprenyl-pyrophosphoryl-MurNAc-pentapeptide, known as lipid I. This chain is Phospho-N-acetylmuramoyl-pentapeptide-transferase, found in Geobacillus kaustophilus (strain HTA426).